Consider the following 151-residue polypeptide: Large ribosomal subunit protein eL19 (151 aa).

Positions 57 to 81 (KKGISSARVKKLKEQRKKGRRRGPG) are enriched in basic residues. Residues 57–95 (KKGISSARVKKLKEQRKKGRRRGPGSRRGAAGARTPPKE) are disordered.

The protein belongs to the eukaryotic ribosomal protein eL19 family. Part of the 50S ribosomal subunit.

Its function is as follows. Binds to the 23S rRNA. This chain is Large ribosomal subunit protein eL19, found in Methanocaldococcus jannaschii (strain ATCC 43067 / DSM 2661 / JAL-1 / JCM 10045 / NBRC 100440) (Methanococcus jannaschii).